A 303-amino-acid chain; its full sequence is UDP-3-O-acyl-N-acetylglucosamine deacetylase (303 aa).

His78, His237, and Asp241 together coordinate Zn(2+). His264 acts as the Proton donor in catalysis.

Belongs to the LpxC family. Requires Zn(2+) as cofactor.

It carries out the reaction a UDP-3-O-[(3R)-3-hydroxyacyl]-N-acetyl-alpha-D-glucosamine + H2O = a UDP-3-O-[(3R)-3-hydroxyacyl]-alpha-D-glucosamine + acetate. Its pathway is glycolipid biosynthesis; lipid IV(A) biosynthesis; lipid IV(A) from (3R)-3-hydroxytetradecanoyl-[acyl-carrier-protein] and UDP-N-acetyl-alpha-D-glucosamine: step 2/6. Functionally, catalyzes the hydrolysis of UDP-3-O-myristoyl-N-acetylglucosamine to form UDP-3-O-myristoylglucosamine and acetate, the committed step in lipid A biosynthesis. This is UDP-3-O-acyl-N-acetylglucosamine deacetylase from Xanthomonas euvesicatoria pv. vesicatoria (strain 85-10) (Xanthomonas campestris pv. vesicatoria).